Here is a 253-residue protein sequence, read N- to C-terminus: Pre-mRNA-splicing factor SPF27 homolog (253 aa).

Residues 124 to 235 are a coiled coil; that stretch reads KQYLQKNQRS…IDSFKKEAAE (112 aa).

Belongs to the SPF27 family. As to quaternary structure, component of the multiprotein assembly MOS4-associated complex (MAC) at least composed of MOS4, CDC5 and PRL1. Interacts with CYCL1-1 and CDC5. Associated with the spliceosome. Interacts with ENY2.

Its subcellular location is the nucleus. In terms of biological role, component of the MAC complex that probably regulates defense responses through transcriptional control and thereby is essential for plant innate immunity. Involved in mRNA splicing. This is Pre-mRNA-splicing factor SPF27 homolog (MOS4) from Arabidopsis thaliana (Mouse-ear cress).